Reading from the N-terminus, the 193-residue chain is Xanthine phosphoribosyltransferase (193 aa).

Leu-20 and Asn-27 together coordinate xanthine. 128 to 132 (ANGEA) is a binding site for 5-phospho-alpha-D-ribose 1-diphosphate. Lys-156 is a xanthine binding site.

Belongs to the purine/pyrimidine phosphoribosyltransferase family. Xpt subfamily. Homodimer.

Its subcellular location is the cytoplasm. It catalyses the reaction XMP + diphosphate = xanthine + 5-phospho-alpha-D-ribose 1-diphosphate. It functions in the pathway purine metabolism; XMP biosynthesis via salvage pathway; XMP from xanthine: step 1/1. Functionally, converts the preformed base xanthine, a product of nucleic acid breakdown, to xanthosine 5'-monophosphate (XMP), so it can be reused for RNA or DNA synthesis. In Exiguobacterium sp. (strain ATCC BAA-1283 / AT1b), this protein is Xanthine phosphoribosyltransferase.